The primary structure comprises 417 residues: MEKPLFRNQKGLMTLLASQTISSLGDWLHILAVLTLAAFQLHASPLDMSLLMMSFALPVIVLGPVSGLLADRFDRKTIMFLSEIGRALTVISCVYVSELWQLYVLLSVQSCFSSLFLPAKNGKLKELAPEAHIQQAVSVSSIIDNSSKIFGPALGGTLIAAFSIHSVFYINAGAFFLSAVILFFLPRDAFLQKANTPQEKTAALTSIKEGLQFLKRMPLLLTGLLTACVVLFVLQIGDSQAIILIRSFSGAPPELAGWCMAVSGAGMLLTAAITGRRRITSYLLYFSAGTLLLGLATGGAPFLSGMGIAGITLFIFAFFIMGAAFGLVHIPFQILVQTTVPVDYSGRVFGAIQSATTLASILGMAGGGVLAEWIGVSLAFLVCGCLLIMIGLITLIGKKIAESRRYLVTKSNKGAQG.

The next 10 membrane-spanning stretches (helical) occupy residues 21–41, 50–70, 88–108, 166–186, 217–237, 255–275, 283–303, 308–328, 351–371, and 373–393; these read ISSL…AFQL, LLMM…GLLA, LTVI…LLSV, SVFY…FFLP, MPLL…LQIG, LAGW…AITG, LLYF…APFL, IAGI…FGLV, AIQS…GVLA, and WIGV…IGLI.

This sequence belongs to the major facilitator superfamily. TCR/Tet family.

The protein localises to the cell membrane. This is an uncharacterized protein from Bacillus subtilis (strain 168).